We begin with the raw amino-acid sequence, 640 residues long: Threonine--tRNA ligase (640 aa).

Positions 1-61 (MPVITLPDGS…SNDATLQIIT (61 aa)) constitute a TGS domain. Positions 242-533 (DHRKIGKQLD…LIEHYAGVFP (292 aa)) are catalytic. 3 residues coordinate Zn(2+): cysteine 333, histidine 384, and histidine 510.

It belongs to the class-II aminoacyl-tRNA synthetase family. In terms of assembly, homodimer. Requires Zn(2+) as cofactor.

It is found in the cytoplasm. It carries out the reaction tRNA(Thr) + L-threonine + ATP = L-threonyl-tRNA(Thr) + AMP + diphosphate + H(+). Catalyzes the attachment of threonine to tRNA(Thr) in a two-step reaction: L-threonine is first activated by ATP to form Thr-AMP and then transferred to the acceptor end of tRNA(Thr). Also edits incorrectly charged L-seryl-tRNA(Thr). This is Threonine--tRNA ligase from Pseudomonas putida (strain GB-1).